The chain runs to 130 residues: uncharacterized protein (130 aa).

The signal sequence occupies residues 1–19; that stretch reads MKVLGNILWWAFVGFMAYA.

This is an uncharacterized protein from Escherichia coli (strain K12).